A 454-amino-acid chain; its full sequence is Pup--protein ligase (454 aa).

Residue glutamate 9 participates in Mg(2+) binding. Arginine 53 contributes to the ATP binding site. Tyrosine 55 contributes to the Mg(2+) binding site. Aspartate 57 (proton acceptor) is an active-site residue. Glutamate 63 contacts Mg(2+). 2 residues coordinate ATP: threonine 66 and tryptophan 420.

The protein belongs to the Pup ligase/Pup deamidase family. Pup-conjugating enzyme subfamily.

It catalyses the reaction ATP + [prokaryotic ubiquitin-like protein]-L-glutamate + [protein]-L-lysine = ADP + phosphate + N(6)-([prokaryotic ubiquitin-like protein]-gamma-L-glutamyl)-[protein]-L-lysine.. The protein operates within protein degradation; proteasomal Pup-dependent pathway. Its pathway is protein modification; protein pupylation. Functionally, catalyzes the covalent attachment of the prokaryotic ubiquitin-like protein modifier Pup to the proteasomal substrate proteins, thereby targeting them for proteasomal degradation. This tagging system is termed pupylation. The ligation reaction involves the side-chain carboxylate of the C-terminal glutamate of Pup and the side-chain amino group of a substrate lysine. The protein is Pup--protein ligase of Arthrobacter sp. (strain FB24).